We begin with the raw amino-acid sequence, 609 residues long: Phosphoprotein 85 (609 aa).

Residues 461-609 (QNEGRASSRA…RSTETNDERL (149 aa)) form a disordered region. Residues 465–478 (RASSRASSSHSTST) show a composition bias toward low complexity. Over residues 484–495 (PQSGRSTPTSIL) the composition is skewed to polar residues. Low complexity-rich tracts occupy residues 503 to 513 (SNSRSSSVSFS) and 552 to 563 (SPQSASSNNSMS). Over residues 600 to 609 (RSTETNDERL) the composition is skewed to basic and acidic residues.

Belongs to the herpesviridae pp85 family. Post-translationally, phosphorylated.

Its subcellular location is the virion tegument. The protein resides in the host cytoplasm. This Homo sapiens (Human) protein is Phosphoprotein 85 (U14).